We begin with the raw amino-acid sequence, 23 residues long: M-myrmeciitoxin-Mp2b (23 aa).

Glutamine 23 is modified (glutamine amide).

Belongs to the formicidae venom precursor-01 superfamily. Ant pilosulin family. Heterodimer with M-MIITX-Mp2a (pilosulin-3a) (AC Q26464); disulfide-linked. Only heterodimers (and not monomers) have been identified in the venom. In terms of tissue distribution, expressed by the venom gland.

Its subcellular location is the secreted. Heterodimer protein that may serve both defensive (pain-inducing) and predatory (insecticidal) roles. Has membrane-disrupting activity and shows induction of non-specific calcium influx into cells,. Shows broad-spectrum activity against a diverse range of bacteria, and cell lines, as well as hemolytic activity (EC(50)=2.18 uM). In vivo, shows moderate insecticidal activity against D.melanogaster and potent anthelmintic activity against the veterinary nematode H.contortus. In addition, intraplantar injection into mice induces nocifensive behavior and mechanical allodynia. This Myrmecia pilosula (Jack jumper ant) protein is M-myrmeciitoxin-Mp2b.